Here is a 178-residue protein sequence, read N- to C-terminus: Small ribosomal subunit protein uS5 (178 aa).

The region spanning 13 to 76 (LEERVVQINR…EAAKRNLIRV (64 aa)) is the S5 DRBM domain. Positions 156–178 (ASRRDMTPQELMERRTRRETEAA) are disordered.

This sequence belongs to the universal ribosomal protein uS5 family. In terms of assembly, part of the 30S ribosomal subunit. Contacts proteins S4 and S8.

With S4 and S12 plays an important role in translational accuracy. In terms of biological role, located at the back of the 30S subunit body where it stabilizes the conformation of the head with respect to the body. In Chloroflexus aurantiacus (strain ATCC 29364 / DSM 637 / Y-400-fl), this protein is Small ribosomal subunit protein uS5.